The chain runs to 248 residues: 14-3-3-like protein G-BOX factor 14 lambda (248 aa).

3 positions are modified to phosphoserine; by CRPK1: serine 70, serine 112, and serine 193. A Phosphothreonine; by CRPK1 modification is found at threonine 214.

It belongs to the 14-3-3 family. As to quaternary structure, interacts with SERK1 in the cell membrane. Component of the SERK1 signaling complex, composed of KAPP, CDC48A, GRF6 or GRF7, SERK1, SERK2, SERK3/BAK1 and BRI1. Interacts with TPK1. Interacts with ADF1. Binds to CRPK1 at the plasma membrane. Interacts with DREB1A and DREB1B in the nucleus when activated by CRPK1-mediated phosphorylation upon freezing. Interacts with CINV1. Binds to the N-terminal region of B1L. Transphosphorylated by SERK1. In terms of processing, phosphorylated by CRPK1 in response to cold.

It localises to the nucleus. Its subcellular location is the cell membrane. The protein resides in the cytoplasm. Functionally, is associated with a DNA binding complex that binds to the G box, a well-characterized cis-acting DNA regulatory element found in plant genes. Specific negative regulator of slow-vacuolar (SV) ion channel. Mediates F-actin dynamics possibly through inhibiting ADF1 phosphorylation. Negative regulator of freezing tolerance that modulates cold-responsive C-repeat-binding factors (CBF) DREB1A and DREB1B proteins stability by facilitating their ubiquitin-mediated degradation when activated by CRPK1-mediated phosphorylation in freezing conditions; this processus is counteracted by B1L. The sequence is that of 14-3-3-like protein G-BOX factor 14 lambda from Arabidopsis thaliana (Mouse-ear cress).